The sequence spans 302 residues: Small ribosomal subunit biogenesis GTPase RsgA (302 aa).

Residues lysine 75–methionine 233 enclose the CP-type G domain. GTP is bound by residues asparagine 124 to aspartate 127 and glycine 175 to serine 183. Cysteine 257, cysteine 262, histidine 264, and cysteine 270 together coordinate Zn(2+).

This sequence belongs to the TRAFAC class YlqF/YawG GTPase family. RsgA subfamily. As to quaternary structure, monomer. Associates with 30S ribosomal subunit, binds 16S rRNA. It depends on Zn(2+) as a cofactor.

It is found in the cytoplasm. One of several proteins that assist in the late maturation steps of the functional core of the 30S ribosomal subunit. Helps release RbfA from mature subunits. May play a role in the assembly of ribosomal proteins into the subunit. Circularly permuted GTPase that catalyzes slow GTP hydrolysis, GTPase activity is stimulated by the 30S ribosomal subunit. This is Small ribosomal subunit biogenesis GTPase RsgA from Agathobacter rectalis (strain ATCC 33656 / DSM 3377 / JCM 17463 / KCTC 5835 / VPI 0990) (Eubacterium rectale).